Consider the following 49-residue polypeptide: Delta-actitoxin-Axm1a (49 aa).

Disulfide bonds link cysteine 4–cysteine 46, cysteine 6–cysteine 36, and cysteine 29–cysteine 47.

It belongs to the sea anemone sodium channel inhibitory toxin family. Type I subfamily.

The protein localises to the secreted. It localises to the nematocyst. Its function is as follows. Binds specifically to voltage-gated sodium channels (Nav) (site 3), thereby delaying their inactivation. This toxin retains the greatest capacity to discriminate between the cardiac (Nav1.5/SCN5A) and neuronal sodium channels (2.5 nM versus 120 nM, when electrophysiologically tested and 14 nM versus 400 nM, when tested by ion flux), whereas its paralog Anthopleurin-B has the highest affinity of all anemone toxins for the mammalian sodium channel. Its ability to differentiate between cardiac and skeletal channels appears to be associated with domain 4 of the channel. This toxin does not slow or inhibit closed-state inactivation of cardiac sodium channels, but selectively modifies inactivation from the open-state. It does not display phospholipid-binding activities, suggesting that the domain IV S3-S4 linker is located at the extracellular surface and not buried in the phospholipid bilayer. This Anthopleura xanthogrammica (Giant green sea anemone) protein is Delta-actitoxin-Axm1a.